We begin with the raw amino-acid sequence, 566 residues long: MTKFVFVTGGVVSSLGKGIASGALAAILESRGLKVTLIKLDPYINVDPGTMSPLQHGEVFVTDDGAETDLDLGHYERFIETRMRKANNFTTGQIYQSVLDKERRGDYLGKTVQVIPHITNEIQDFIKRGARYDTPDAVDVAIVEIGGTVGDIESLPFLEAVRQMSLRMGPNNSAFVHLSYVPWIAAAGELKTKPTQHTAKQLREIGIQADVLLCRADRPIPTEERDKISLFSNVPAWGVISMWDVDTIYKVPRMLHEQGLDGLICDKLRLHTPPANLKRWDDLVYATEHPQTEVSIAMVGKYVDLSDSYKSLNEALRHAGMKNHAKVVITYVDSETLTPDTVSSLAQFDGILVPGGFGVRGVEGKICAARFARENKIPYLGICLGMQVATIEFARHVAGLKDANSTEFDPLTPHPVIALITEWKDADGTIKTRHAKSDLGGTMRLGAQSSDVSPNSLAHSIYGDVVTERHRHRYEANVNYLDTLRKSGLVISALTQREHLTEIVELPQDVHPWFVGVQFHPEFKSTPWDGHPLFNAYIAATLEQRSALSQAKKAETAKPLKVVAST.

Residues 1-270 are amidoligase domain; sequence MTKFVFVTGG…DGLICDKLRL (270 aa). Ser13 is a binding site for CTP. Ser13 provides a ligand contact to UTP. ATP-binding positions include 14-19 and Asp71; that span reads SLGKGI. Positions 71 and 144 each coordinate Mg(2+). Residues 151-153, 191-196, and Lys227 contribute to the CTP site; these read DIE and KTKPTQ. Residues 191–196 and Lys227 each bind UTP; that span reads KTKPTQ. The Glutamine amidotransferase type-1 domain maps to 295–547; sequence SIAMVGKYVD…IAATLEQRSA (253 aa). Gly356 serves as a coordination point for L-glutamine. Residue Cys383 is the Nucleophile; for glutamine hydrolysis of the active site. Residues 384–387, Glu407, and Arg473 contribute to the L-glutamine site; that span reads LGMQ. Active-site residues include His520 and Glu522.

Belongs to the CTP synthase family. As to quaternary structure, homotetramer.

The catalysed reaction is UTP + L-glutamine + ATP + H2O = CTP + L-glutamate + ADP + phosphate + 2 H(+). The enzyme catalyses L-glutamine + H2O = L-glutamate + NH4(+). It catalyses the reaction UTP + NH4(+) + ATP = CTP + ADP + phosphate + 2 H(+). The protein operates within pyrimidine metabolism; CTP biosynthesis via de novo pathway; CTP from UDP: step 2/2. Its activity is regulated as follows. Allosterically activated by GTP, when glutamine is the substrate; GTP has no effect on the reaction when ammonia is the substrate. The allosteric effector GTP functions by stabilizing the protein conformation that binds the tetrahedral intermediate(s) formed during glutamine hydrolysis. Inhibited by the product CTP, via allosteric rather than competitive inhibition. Catalyzes the ATP-dependent amination of UTP to CTP with either L-glutamine or ammonia as the source of nitrogen. Regulates intracellular CTP levels through interactions with the four ribonucleotide triphosphates. The polypeptide is CTP synthase (Polaromonas naphthalenivorans (strain CJ2)).